A 340-amino-acid chain; its full sequence is Eukaryotic translation initiation factor 3 subunit I (340 aa).

WD repeat units lie at residues 8-47, 50-91, 150-189, 194-233, and 291-330; these read GHER…RLGT, GHQG…KVWD, CTES…QLEN, EFDH…ILKT, and GHFG…FDFM.

Belongs to the eIF-3 subunit I family. As to quaternary structure, component of the eukaryotic translation initiation factor 3 (eIF-3) complex.

The protein resides in the cytoplasm. In terms of biological role, component of the eukaryotic translation initiation factor 3 (eIF-3) complex, which is involved in protein synthesis of a specialized repertoire of mRNAs and, together with other initiation factors, stimulates binding of mRNA and methionyl-tRNAi to the 40S ribosome. The eIF-3 complex specifically targets and initiates translation of a subset of mRNAs involved in cell proliferation. The chain is Eukaryotic translation initiation factor 3 subunit I (tif34) from Aspergillus fumigatus (strain CBS 144.89 / FGSC A1163 / CEA10) (Neosartorya fumigata).